Here is a 394-residue protein sequence, read N- to C-terminus: Multidrug resistance protein D (394 aa).

The Cytoplasmic portion of the chain corresponds to 1-8; that stretch reads MKRQRNVN. A helical transmembrane segment spans residues 9 to 29; it reads LLLMLVLLVAVGQMAQTIYIP. The Periplasmic portion of the chain corresponds to 30-46; it reads AIADMARDLNVREGAVQ. Residues 47-67 traverse the membrane as a helical segment; the sequence is SVMGAYLLTYGVSQLFYGPIS. Residues 68-73 lie on the Cytoplasmic side of the membrane; that stretch reads DRVGRR. Residues 74 to 94 traverse the membrane as a helical segment; that stretch reads PVILVGMSIFMLATLVAVTTS. S95 is a topological domain (periplasmic). Residues 96–116 form a helical membrane-spanning segment; that stretch reads LTVLIAASAMQGMGTGVGGVM. Residues 117 to 134 are Cytoplasmic-facing; the sequence is ARTLPRDLYERTQLRHAN. Residues 135–155 traverse the membrane as a helical segment; the sequence is SLLNMGILVSPLLAPLIGGLL. The Periplasmic portion of the chain corresponds to 156 to 162; the sequence is DTMWNWR. Residues 163–183 form a helical membrane-spanning segment; the sequence is ACYLFLLVLCAGVTFSMARWM. At 184 to 212 the chain is on the cytoplasmic side; it reads PETRPVDAPRTRLLTSYKTLFGNSGFNCY. The helical transmembrane segment at 213 to 233 threads the bilayer; it reads LLMLIGGLAGIAAFEACSGVL. At 234–242 the chain is on the periplasmic side; sequence MGAVLGLSS. A helical membrane pass occupies residues 243 to 263; the sequence is MTVSILFILPIPAAFFGAWFA. At 264 to 276 the chain is on the cytoplasmic side; sequence GRPNKRFSTLMWQ. Residues 277-297 form a helical membrane-spanning segment; the sequence is SVICCLLAGLLMWIPDWFGVM. Position 298 (N298) is a topological domain, periplasmic. The helical transmembrane segment at 299–319 threads the bilayer; it reads VWTLLVPAALFFFGAGMLFPL. Topologically, residues 320 to 329 are cytoplasmic; sequence ATSGAMEPFP. Residues 330–350 form a helical membrane-spanning segment; sequence FLAGTAGALVGGLQNIGSGVL. The Periplasmic portion of the chain corresponds to 351–364; the sequence is ASLSAMLPQTGQGS. The helical transmembrane segment at 365 to 385 threads the bilayer; the sequence is LGLLMTLMGLLIVLCWLPLAT. The Cytoplasmic segment spans residues 386 to 394; that stretch reads RMSHQGQPV.

This sequence belongs to the major facilitator superfamily.

It is found in the cell inner membrane. Functionally, multidrug resistance pump that participates in a low energy shock adaptive response. This Escherichia coli (strain K12) protein is Multidrug resistance protein D (emrD).